The primary structure comprises 507 residues: Probable DNA ligase (507 aa).

Glutamate 209 serves as a coordination point for ATP. Residue lysine 211 is the N6-AMP-lysine intermediate of the active site. Positions 216, 231, 260, 295, 366, and 372 each coordinate ATP.

Belongs to the ATP-dependent DNA ligase family. Mg(2+) serves as cofactor.

It catalyses the reaction ATP + (deoxyribonucleotide)n-3'-hydroxyl + 5'-phospho-(deoxyribonucleotide)m = (deoxyribonucleotide)n+m + AMP + diphosphate.. Functionally, DNA ligase that seals nicks in double-stranded DNA during DNA replication, DNA recombination and DNA repair. In Pseudarthrobacter chlorophenolicus (strain ATCC 700700 / DSM 12829 / CIP 107037 / JCM 12360 / KCTC 9906 / NCIMB 13794 / A6) (Arthrobacter chlorophenolicus), this protein is Probable DNA ligase.